Reading from the N-terminus, the 1361-residue chain is Cell migration-inducing and hyaluronan-binding protein (1361 aa).

Positions 1–30 (MGAAGRQDFLFKAMLTISWLTLTCFPGATS) are cleaved as a signal peptide. A G8 domain is found at 44–166 (QPWNPGHDQD…KKLSWTFLNK (123 aa)). Residues N119, N165, N312, N370, and N420 are each glycosylated (N-linked (GlcNAc...) asparagine). The GG-type lectin 1 domain occupies 176-317 (GGYFFERSWG…GEYFNVSLSS (142 aa)). Residues 295-591 (AAARVFKLFQ…IHHTFSRCVT (297 aa)) are necessary for its endoplasmic reticulum (ER) retention and interaction with HSPA5. 4 PbH1 repeats span residues 572-594 (DPPTYIRDLSIHHTFSRCVTVHG), 595-617 (SNGLLIKDVVGYNSLGHCFFTED), 719-741 (IPLGKFYNNRAHSNYRAGMIIDN), and 798-819 (GGDVWLDSCRFADNGIGLTLAS). 2 N-linked (GlcNAc...) asparagine glycosylation sites follow: N889 and N921. A GG-type lectin 2 domain is found at 1227 to 1361 (NDFAYIEVDG…PIPVVKKKKL (135 aa)).

It belongs to the CEMIP family. As to quaternary structure, interacts with EPHA2 and ITPR3. Interacts with HSPA5/BIP; the interaction induces calcium leakage from the endoplasmic reticulum and cell migration. Interacts with clathrin heavy chain/CLTC. Post-translationally, N-glycosylated; glycosylation is not necessary for HA-binding. As to expression, expressed in dermal and in synovial fibroblasts. Strongly expressed in gastric cancers compared with the paired normal tissues. Strongly expressed in both ductal carcinoma and invasive breast cancer cells compared with benign epithelial cells (at protein level). Strongly expressed in brain, placenta, prostate, breast, lung and testis. Expressed in fibroblasts, epithelial cells and cancer cells. In ear, it is specifically expressed in inner ear. Expressed in cochlea and vestibule tissues. Strongly expressed in gastric cancers compared with the paired normal tissues. Strongly expressed in colon adenocarcinomas compared with normal colonic mucosas. Strongly expressed in breast cancer as compared to normal breast tissue.

Its subcellular location is the nucleus. It is found in the cytoplasm. The protein localises to the endoplasmic reticulum. It localises to the cell membrane. The protein resides in the membrane. Its subcellular location is the clathrin-coated pit. It is found in the secreted. It carries out the reaction Random hydrolysis of (1-&gt;4)-linkages between N-acetyl-beta-D-glucosamine and D-glucuronate residues in hyaluronate.. With respect to regulation, activity is up-regulated by histamine. In terms of biological role, mediates depolymerization of hyaluronic acid (HA) via the cell membrane-associated clathrin-coated pit endocytic pathway. Binds to hyaluronic acid. Hydrolyzes high molecular weight hyaluronic acid to produce an intermediate-sized product, a process that may occur through rapid vesicle endocytosis and recycling without intracytoplasmic accumulation or digestion in lysosomes. Involved in hyaluronan catabolism in the dermis of the skin and arthritic synovium. Positively regulates epithelial-mesenchymal transition (EMT), and hence tumor cell growth, invasion and cancer dissemination. In collaboration with HSPA5/BIP, promotes cancer cell migration in a calcium and PKC-dependent manner. May be involved in hearing. The chain is Cell migration-inducing and hyaluronan-binding protein from Homo sapiens (Human).